A 396-amino-acid polypeptide reads, in one-letter code: Ribosomal RNA large subunit methyltransferase I (396 aa).

The 78-residue stretch at 2–79 (AIRIKLKPGR…REEEIDREFF (78 aa)) folds into the PUA domain.

This sequence belongs to the methyltransferase superfamily. RlmI family.

Its subcellular location is the cytoplasm. It catalyses the reaction cytidine(1962) in 23S rRNA + S-adenosyl-L-methionine = 5-methylcytidine(1962) in 23S rRNA + S-adenosyl-L-homocysteine + H(+). Its function is as follows. Specifically methylates the cytosine at position 1962 (m5C1962) of 23S rRNA. This Shewanella baltica (strain OS155 / ATCC BAA-1091) protein is Ribosomal RNA large subunit methyltransferase I.